The primary structure comprises 391 residues: MFLKNIFIALAIALLVDASPAKRSPGFVTLDFDVIKTPVNATGQEGKVKRQAIPVTLNNELVSYAADITIGSNKQKFNVIVDTGSSDLWVPDASVTCDKPRPGQSADFCKGKGIYTPKSSTTSQNLGSPFYIGYGDGSSSQGTLYKDTVGFGGASITKQVFADITKTSIPQGILGIGYKTNEAAGDYDNVPVTLKNQGVIAKNAYSLYLNSPNAATGQIIFGGVDKAKYSGSLIAVPVTSDRELRITLNSLKAVGKNINGNIDVLLDSGTTITYLQQDVAQDIIDAFQAELKSDGQGHTFYVTDCQTSGTVDFNFDNNAKISVPASEFTAPLSYANGQPYPKCQLLLGISDANILGDNFLRSAYLVYDLDDDKISLAQVKYTSASNIAALT.

The first 18 residues, 1–18 (MFLKNIFIALAIALLVDA), serve as a signal peptide directing secretion. The propeptide at 19 to 50 (SPAKRSPGFVTLDFDVIKTPVNATGQEGKVKR) is activation peptide. An N-linked (GlcNAc...) asparagine glycan is attached at N40. The region spanning 64-377 (YAADITIGSN…DLDDDKISLA (314 aa)) is the Peptidase A1 domain. The active site involves D82. Residue 82–84 (DTG) participates in pepstatin A binding. C97 and C109 form a disulfide bridge. The Zn(2+) site is built by D241 and D263. D267 is an active-site residue. A pepstatin A-binding site is contributed by 267-271 (DSGTT). C305 and C343 are oxidised to a cystine.

The protein belongs to the peptidase A1 family. In terms of assembly, monomer.

It is found in the secreted. The enzyme catalyses Preferential cleavage at the carboxyl of hydrophobic amino acids, but fails to cleave 15-Leu-|-Tyr-16, 16-Tyr-|-Leu-17 and 24-Phe-|-Phe-25 of insulin B chain. Activates trypsinogen, and degrades keratin.. With respect to regulation, inhibited by pepstatin A analogs and squash aspartic peptidase inhibitor (SQAPI). Secreted aspartic peptidases (SAPs) are a group of ten acidic hydrolases considered as key virulence factors. These enzymes supply the fungus with nutrient amino acids as well as are able to degrade the selected host's proteins involved in the immune defense. Induces host inflammatory cytokine production in a proteolytic activity-independent way. Plays a role in tissue damage during superficial infection. Moreover, acts toward human hemoglobin though limited proteolysis to generate a variety of antimicrobial hemocidins, enabling to compete with the other microorganisms of the same physiological niche using the microbicidal peptides generated from the host protein. Its function is as follows. Plays a key role in defense against host by cleaving histatin-5 (Hst 5), a peptide from human saliva that carries out fungicidal activity. The cleavage rate decreases in an order of SAP2 &gt; SAP9 &gt; SAP3 &gt; SAP7 &gt; SAP4 &gt; SAP1 &gt; SAP8. The first cleavage occurs between residues 'Lys-17' and 'His-18' of Hst 5, giving DSHAKRHHGYKRKFHEK and HHSHRGY peptides. Further fragmentation by SAP1 results in AKRHHGYKRKFHEK and AKRHHGY products. In Candida albicans (Yeast), this protein is Secreted aspartic protease 1.